We begin with the raw amino-acid sequence, 123 residues long: Small ribosomal subunit protein uS13 (123 aa).

The disordered stretch occupies residues 97–123; sequence PVRGQRTKTNARTRKGPRKTVGVRRKK.

It belongs to the universal ribosomal protein uS13 family. Part of the 30S ribosomal subunit. Forms a loose heterodimer with protein S19. Forms two bridges to the 50S subunit in the 70S ribosome.

Located at the top of the head of the 30S subunit, it contacts several helices of the 16S rRNA. In the 70S ribosome it contacts the 23S rRNA (bridge B1a) and protein L5 of the 50S subunit (bridge B1b), connecting the 2 subunits; these bridges are implicated in subunit movement. Contacts the tRNAs in the A and P-sites. This is Small ribosomal subunit protein uS13 from Pelotomaculum thermopropionicum (strain DSM 13744 / JCM 10971 / SI).